The sequence spans 295 residues: Nitrogenase iron protein 1 (295 aa).

13–20 (GKGGIGKS) contributes to the ATP binding site. Cys101 contributes to the [4Fe-4S] cluster binding site. Arg104 bears the ADP-ribosylarginine; by dinitrogenase reductase ADP-ribosyltransferase mark. Residue Cys135 participates in [4Fe-4S] cluster binding.

The protein belongs to the NifH/BchL/ChlL family. Homodimer. [4Fe-4S] cluster serves as cofactor. Post-translationally, the reversible ADP-ribosylation of Arg-104 inactivates the nitrogenase reductase and regulates nitrogenase activity.

It carries out the reaction N2 + 8 reduced [2Fe-2S]-[ferredoxin] + 16 ATP + 16 H2O = H2 + 8 oxidized [2Fe-2S]-[ferredoxin] + 2 NH4(+) + 16 ADP + 16 phosphate + 6 H(+). In terms of biological role, the key enzymatic reactions in nitrogen fixation are catalyzed by the nitrogenase complex, which has 2 components: the iron protein and the molybdenum-iron protein. In Nostoc sp. (strain PCC 7120 / SAG 25.82 / UTEX 2576), this protein is Nitrogenase iron protein 1 (nifH1).